The chain runs to 415 residues: Gamma-glutamyl phosphate reductase (415 aa).

Belongs to the gamma-glutamyl phosphate reductase family.

It is found in the cytoplasm. It carries out the reaction L-glutamate 5-semialdehyde + phosphate + NADP(+) = L-glutamyl 5-phosphate + NADPH + H(+). It participates in amino-acid biosynthesis; L-proline biosynthesis; L-glutamate 5-semialdehyde from L-glutamate: step 2/2. Catalyzes the NADPH-dependent reduction of L-glutamate 5-phosphate into L-glutamate 5-semialdehyde and phosphate. The product spontaneously undergoes cyclization to form 1-pyrroline-5-carboxylate. This Dictyoglomus turgidum (strain DSM 6724 / Z-1310) protein is Gamma-glutamyl phosphate reductase.